A 185-amino-acid chain; its full sequence is Probable chorismate pyruvate-lyase 1 (185 aa).

Residues Arg70, Leu108, and Glu166 each contribute to the substrate site.

It belongs to the UbiC family.

Its subcellular location is the cytoplasm. The enzyme catalyses chorismate = 4-hydroxybenzoate + pyruvate. It functions in the pathway cofactor biosynthesis; ubiquinone biosynthesis. Functionally, removes the pyruvyl group from chorismate, with concomitant aromatization of the ring, to provide 4-hydroxybenzoate (4HB) for the ubiquinone pathway. The polypeptide is Probable chorismate pyruvate-lyase 1 (Pseudomonas fluorescens (strain Pf0-1)).